The following is a 200-amino-acid chain: Adenine phosphoribosyltransferase (200 aa).

It belongs to the purine/pyrimidine phosphoribosyltransferase family. Homodimer.

It is found in the cytoplasm. It carries out the reaction AMP + diphosphate = 5-phospho-alpha-D-ribose 1-diphosphate + adenine. It functions in the pathway purine metabolism; AMP biosynthesis via salvage pathway; AMP from adenine: step 1/1. Catalyzes a salvage reaction resulting in the formation of AMP, that is energically less costly than de novo synthesis. The polypeptide is Adenine phosphoribosyltransferase (Sorangium cellulosum (strain So ce56) (Polyangium cellulosum (strain So ce56))).